Reading from the N-terminus, the 206-residue chain is Large ribosomal subunit protein uL4 (206 aa).

The interval Lys-44–Gly-87 is disordered. Positions Gly-60–Gly-71 are enriched in basic residues.

The protein belongs to the universal ribosomal protein uL4 family. As to quaternary structure, part of the 50S ribosomal subunit.

One of the primary rRNA binding proteins, this protein initially binds near the 5'-end of the 23S rRNA. It is important during the early stages of 50S assembly. It makes multiple contacts with different domains of the 23S rRNA in the assembled 50S subunit and ribosome. Its function is as follows. Forms part of the polypeptide exit tunnel. This Agathobacter rectalis (strain ATCC 33656 / DSM 3377 / JCM 17463 / KCTC 5835 / VPI 0990) (Eubacterium rectale) protein is Large ribosomal subunit protein uL4.